Here is a 96-residue protein sequence, read N- to C-terminus: Dynein light chain roadblock-type 2 (96 aa).

Position 2 is an N-acetylalanine (A2).

It belongs to the GAMAD family. As to quaternary structure, homodimer. The cytoplasmic dynein 1 complex consists of two catalytic heavy chains (HCs) and a number of non-catalytic subunits presented by intermediate chains (ICs), light intermediate chains (LICs) and light chains (LCs); the composition seems to vary in respect to the IC, LIC and LC composition. The heavy chain homodimer serves as a scaffold for the probable homodimeric assembly of the respective non-catalytic subunits. The ICs and LICs bind directly to the HC dimer and the LCs assemble on the IC dimer. Interacts with DYNC1I1 and DYNC1I2. Self-associates. Interacts with DYNLRB1. In terms of tissue distribution, high expression in heart, brain, placenta, skeletal muscle, prostate and small intestine; moderate in kidney, pancreas, spleen, testis, ovary and colon; low in lung, liver, thymus and leukocyte.

The protein resides in the cytoplasm. Its subcellular location is the cytoskeleton. Its function is as follows. Acts as one of several non-catalytic accessory components of the cytoplasmic dynein 1 complex that are thought to be involved in linking dynein to cargos and to adapter proteins that regulate dynein function. Cytoplasmic dynein 1 acts as a motor for the intracellular retrograde motility of vesicles and organelles along microtubules. The protein is Dynein light chain roadblock-type 2 (DYNLRB2) of Homo sapiens (Human).